A 417-amino-acid chain; its full sequence is Maltodextrin-binding protein MdxE (417 aa).

The N-terminal stretch at 1–22 (MVLLKKGFAILAASFLAIGLAA) is a signal peptide. The N-palmitoyl cysteine moiety is linked to residue C23. C23 carries S-diacylglycerol cysteine lipidation.

It belongs to the bacterial solute-binding protein 1 family. In terms of assembly, the complex is composed of two ATP-binding proteins (MsmX), two transmembrane proteins (MdxF and MdxG) and a solute-binding protein (MdxE).

It localises to the cell membrane. Inhibited by glucose and lactose. Its function is as follows. Part of the ABC transporter complex involved in maltodextrin import. Binds maltodextrin. Can also bind maltose with low affinity, but is not involved in its uptake. The polypeptide is Maltodextrin-binding protein MdxE (mdxE) (Bacillus subtilis (strain 168)).